The sequence spans 232 residues: Ubiquinone biosynthesis O-methyltransferase (232 aa).

Arginine 36, glycine 55, aspartate 76, and leucine 120 together coordinate S-adenosyl-L-methionine.

It belongs to the methyltransferase superfamily. UbiG/COQ3 family.

It carries out the reaction a 3-demethylubiquinol + S-adenosyl-L-methionine = a ubiquinol + S-adenosyl-L-homocysteine + H(+). It catalyses the reaction a 3-(all-trans-polyprenyl)benzene-1,2-diol + S-adenosyl-L-methionine = a 2-methoxy-6-(all-trans-polyprenyl)phenol + S-adenosyl-L-homocysteine + H(+). It participates in cofactor biosynthesis; ubiquinone biosynthesis. Functionally, O-methyltransferase that catalyzes the 2 O-methylation steps in the ubiquinone biosynthetic pathway. This Pseudomonas entomophila (strain L48) protein is Ubiquinone biosynthesis O-methyltransferase.